Here is a 286-residue protein sequence, read N- to C-terminus: Phosphatidylserine decarboxylase proenzyme (286 aa).

Active-site charge relay system; for autoendoproteolytic cleavage activity residues include aspartate 90, histidine 147, and serine 252. Catalysis depends on serine 252, which acts as the Schiff-base intermediate with substrate; via pyruvic acid; for decarboxylase activity. At serine 252 the chain carries Pyruvic acid (Ser); by autocatalysis.

The protein belongs to the phosphatidylserine decarboxylase family. PSD-B subfamily. Prokaryotic type I sub-subfamily. Heterodimer of a large membrane-associated beta subunit and a small pyruvoyl-containing alpha subunit. Pyruvate serves as cofactor. Post-translationally, is synthesized initially as an inactive proenzyme. Formation of the active enzyme involves a self-maturation process in which the active site pyruvoyl group is generated from an internal serine residue via an autocatalytic post-translational modification. Two non-identical subunits are generated from the proenzyme in this reaction, and the pyruvate is formed at the N-terminus of the alpha chain, which is derived from the carboxyl end of the proenzyme. The autoendoproteolytic cleavage occurs by a canonical serine protease mechanism, in which the side chain hydroxyl group of the serine supplies its oxygen atom to form the C-terminus of the beta chain, while the remainder of the serine residue undergoes an oxidative deamination to produce ammonia and the pyruvoyl prosthetic group on the alpha chain. During this reaction, the Ser that is part of the protease active site of the proenzyme becomes the pyruvoyl prosthetic group, which constitutes an essential element of the active site of the mature decarboxylase.

It is found in the cell membrane. It carries out the reaction a 1,2-diacyl-sn-glycero-3-phospho-L-serine + H(+) = a 1,2-diacyl-sn-glycero-3-phosphoethanolamine + CO2. It participates in phospholipid metabolism; phosphatidylethanolamine biosynthesis; phosphatidylethanolamine from CDP-diacylglycerol: step 2/2. In terms of biological role, catalyzes the formation of phosphatidylethanolamine (PtdEtn) from phosphatidylserine (PtdSer). This is Phosphatidylserine decarboxylase proenzyme from Pseudomonas fluorescens (strain Pf0-1).